Consider the following 647-residue polypeptide: Pumilio homolog 3 (647 aa).

The segment covering 1–10 (MEVKGKKKIT) has biased composition (basic residues). Residues 1 to 123 (MEVKGKKKIT…KKKKELKQNR (123 aa)) are disordered. Position 33 is an N6-acetyllysine (Lys-33). Over residues 59-68 (PGKKRVKQFK) the composition is skewed to basic residues. A compositionally biased stretch (basic and acidic residues) spans 93-123 (FQPDGKSDESAAKKPKWDDFKKKKKELKQNR). The short motif at 105 to 117 (KKPKWDDFKKKKK) is the Nuclear localization signal element. Residues 142 to 509 (ESLRRKDCDK…VVLDKSVCVL (368 aa)) enclose the PUM-HD domain. Pumilio repeat units follow at residues 176-211 (HDSTRVIQCLIQYGSEEQRKWAFEELQGDLVELSKA), 212-247 (KYSRNIVKKFLMYGSKPQIAEIIRSFKGHVRKMLRH), 248-276 (SEASAIVEYAYNDKAILEQRNMLTEELYG), 288-324 (PTLEKVLEVQPGKLELILDEMKQILTPMAQKEAVIKH), 325-360 (SLVHKVFLDFFTYAPPKLRSELIEAIREAVVYLAHT), 361-396 (HDGARVAMHCLWHGTPKDRKVIVKTMKTYVEKIANG), 397-434 (QYSHLVLLAAFDCIDDTKLVKQIIISEVISSLPSIVND), 435-503 (KYGR…VVLD), 504-550 (KSVC…IAEH), 551-595 (PAGH…WASI), and 596-635 (NRGAIVLSSLLQSCDQDVVNKVKAGLKTLIPTLEKTKSTS).

In terms of assembly, interacts with PARP1 (via catalytic domain).

It localises to the nucleus. Its subcellular location is the nucleolus. It is found in the nucleoplasm. The protein resides in the chromosome. Inhibits the poly(ADP-ribosyl)ation activity of PARP1 and the degradation of PARP1 by CASP3 following genotoxic stress. Binds to double-stranded RNA or DNA without sequence specificity. Involved in development of the eye and of primordial germ cells. In Rattus norvegicus (Rat), this protein is Pumilio homolog 3.